The chain runs to 423 residues: GTPase Obg (423 aa).

In terms of domain architecture, Obg spans 1–158 (MFYDEAKIYV…RWLVLELKLL (158 aa)). Residues 159-328 (ADVGLIGLPN…LLYHVSGLLA (170 aa)) enclose the OBG-type G domain. GTP-binding positions include 165 to 172 (GLPNAGKS), 190 to 194 (FTTLT), 212 to 215 (DIPG), 281 to 284 (NKMD), and 309 to 311 (SAA). 2 residues coordinate Mg(2+): serine 172 and threonine 192. The 86-residue stretch at 336–421 (VTAPEEEKVT…IGKFEFEYVE (86 aa)) folds into the OCT domain.

Belongs to the TRAFAC class OBG-HflX-like GTPase superfamily. OBG GTPase family. Monomer. It depends on Mg(2+) as a cofactor.

It localises to the cytoplasm. In terms of biological role, an essential GTPase which binds GTP, GDP and possibly (p)ppGpp with moderate affinity, with high nucleotide exchange rates and a fairly low GTP hydrolysis rate. Plays a role in control of the cell cycle, stress response, ribosome biogenesis and in those bacteria that undergo differentiation, in morphogenesis control. This chain is GTPase Obg, found in Moorella thermoacetica (strain ATCC 39073 / JCM 9320).